A 451-amino-acid chain; its full sequence is Cobalamin reductase PduS (451 aa).

2 consecutive 4Fe-4S ferredoxin-type domains span residues T255–S284 and P300–N330. Residues C264, C267, C270, C274, C309, C312, C315, and C320 each contribute to the [4Fe-4S] cluster site.

This sequence belongs to the PduS cobalamin reductase family. In terms of assembly, monomer, forms a complex with PduO. Interacts with PduT, probably via the N-terminus of PduS. Requires [4Fe-4S] cluster as cofactor. The cofactor is FMN.

The protein localises to the bacterial microcompartment. It participates in polyol metabolism; 1,2-propanediol degradation. A bifunctional cobalamin reductase that converts cob(III)alamin to cob(II)alamin and then to cob(I)alamin in the bacterial microcompartment (BMC) dedicated to 1,2-propanediol (1,2-PD) degradation. PduS and PduO allow regeneration of the adenosylcobalamin cofactor within the BMC. Cobalamin reduction probably occurs spontaneously in the presence of free reduced flavin nucleotides, this protein may be involved in electron transfer for this reduction. Functionally, expression of a cosmid containing the full 21-gene pdu operon in E.coli allows E.coli to grow on 1,2-propanediol (1,2-PD) with the appearance of BMCs in its cytoplasm. In terms of biological role, the 1,2-PD-specific bacterial microcompartment (BMC) concentrates low levels of 1,2-PD catabolic enzymes, concentrates volatile reaction intermediates thus enhancing pathway flux and keeps the level of toxic, mutagenic propionaldehyde low. The protein is Cobalamin reductase PduS of Citrobacter freundii.